We begin with the raw amino-acid sequence, 153 residues long: Large ribosomal subunit protein uL15 (153 aa).

Residues 1-42 (MRLNTIKPGMGSTKPRRRVGRGIGSGLGKTCGRGHKGQKSRA) are disordered. The segment covering 21–31 (RGIGSGLGKTC) has biased composition (gly residues).

It belongs to the universal ribosomal protein uL15 family. Part of the 50S ribosomal subunit.

Its function is as follows. Binds to the 23S rRNA. The protein is Large ribosomal subunit protein uL15 of Nitrosomonas eutropha (strain DSM 101675 / C91 / Nm57).